A 301-amino-acid polypeptide reads, in one-letter code: Coiled-coil domain-containing protein 69-B (301 aa).

The interval 1–43 is disordered; sequence MGSKTSKMCCPQLRKKKRQKAHKEGPSSQELNDLNAKSQGPNE. Gly2 is lipidated: N-myristoyl glycine. Over residues 26-41 the composition is skewed to polar residues; it reads PSSQELNDLNAKSQGP. 2 coiled-coil regions span residues 42-167 and 213-281; these read NELL…SILS and KSTM…NLYR.

This sequence belongs to the CCDC69 family.

It localises to the cytoplasm. The protein localises to the cytoskeleton. It is found in the spindle. Its subcellular location is the midbody. May act as a scaffold to regulate the recruitment and assembly of spindle midzone components. This Xenopus laevis (African clawed frog) protein is Coiled-coil domain-containing protein 69-B (ccdc69-b).